The sequence spans 503 residues: Probable cytosol aminopeptidase (503 aa).

Mn(2+) contacts are provided by Lys-270 and Asp-275. Lys-282 is an active-site residue. Positions 293, 352, and 354 each coordinate Mn(2+). Arg-356 is an active-site residue.

The protein belongs to the peptidase M17 family. Requires Mn(2+) as cofactor.

Its subcellular location is the cytoplasm. It carries out the reaction Release of an N-terminal amino acid, Xaa-|-Yaa-, in which Xaa is preferably Leu, but may be other amino acids including Pro although not Arg or Lys, and Yaa may be Pro. Amino acid amides and methyl esters are also readily hydrolyzed, but rates on arylamides are exceedingly low.. It catalyses the reaction Release of an N-terminal amino acid, preferentially leucine, but not glutamic or aspartic acids.. Functionally, presumably involved in the processing and regular turnover of intracellular proteins. Catalyzes the removal of unsubstituted N-terminal amino acids from various peptides. This chain is Probable cytosol aminopeptidase, found in Shigella dysenteriae serotype 1 (strain Sd197).